The sequence spans 269 residues: Monofunctional glycosyltransferase (269 aa).

A helical membrane pass occupies residues 46–66; it reads ILLTILIIIALFIGIMYFLST.

Belongs to the glycosyltransferase 51 family.

It localises to the cell membrane. The enzyme catalyses [GlcNAc-(1-&gt;4)-Mur2Ac(oyl-L-Ala-gamma-D-Glu-L-Lys-D-Ala-D-Ala)](n)-di-trans,octa-cis-undecaprenyl diphosphate + beta-D-GlcNAc-(1-&gt;4)-Mur2Ac(oyl-L-Ala-gamma-D-Glu-L-Lys-D-Ala-D-Ala)-di-trans,octa-cis-undecaprenyl diphosphate = [GlcNAc-(1-&gt;4)-Mur2Ac(oyl-L-Ala-gamma-D-Glu-L-Lys-D-Ala-D-Ala)](n+1)-di-trans,octa-cis-undecaprenyl diphosphate + di-trans,octa-cis-undecaprenyl diphosphate + H(+). Its pathway is cell wall biogenesis; peptidoglycan biosynthesis. Functionally, peptidoglycan polymerase that catalyzes glycan chain elongation using lipid-linked disaccharide-pentapeptide as the substrate. The sequence is that of Monofunctional glycosyltransferase from Staphylococcus aureus (strain Newman).